A 328-amino-acid polypeptide reads, in one-letter code: Galactinol synthase 10 (328 aa).

Residue Lys106 is part of the active site. Mn(2+) is bound by residues Asp122, Asp124, and His248.

Belongs to the glycosyltransferase 8 family. Galactosyltransferase subfamily. Requires a divalent metal cation as cofactor.

The protein localises to the cytoplasm. It catalyses the reaction myo-inositol + UDP-alpha-D-galactose = alpha-D-galactosyl-(1-&gt;3)-1D-myo-inositol + UDP + H(+). Functionally, galactinol synthase involved in the biosynthesis of raffinose family oligosaccharides (RFOs) that function as osmoprotectants. May promote plant stress tolerance. This is Galactinol synthase 10 (GOLS10) from Arabidopsis thaliana (Mouse-ear cress).